A 361-amino-acid chain; its full sequence is Ornithine carbamoyltransferase, mitochondrial (361 aa).

The N-terminal 24 residues, 1–24 (MIPTARCGALRQKIPVQAVRQYSS), are a transit peptide targeting the mitochondrion. Carbamoyl phosphate contacts are provided by residues 89–92 (STRT), Arg140, His167, and Gln170. 4 residues coordinate L-ornithine: Asn207, Asp273, Ser277, and Met278. The active-site Proton acceptor is Cys315. Residues 315–316 (CL) and Arg342 contribute to the carbamoyl phosphate site.

Belongs to the aspartate/ornithine carbamoyltransferase superfamily. OTCase family. As to quaternary structure, homotrimer.

The protein resides in the mitochondrion matrix. The enzyme catalyses carbamoyl phosphate + L-ornithine = L-citrulline + phosphate + H(+). It functions in the pathway amino-acid biosynthesis; L-arginine biosynthesis; L-arginine from L-ornithine and carbamoyl phosphate: step 1/3. The polypeptide is Ornithine carbamoyltransferase, mitochondrial (arg1) (Aspergillus terreus).